Here is a 412-residue protein sequence, read N- to C-terminus: Proteasome-activating nucleotidase (412 aa).

Residues 18 to 72 are a coiled coil; the sequence is YRYLVDRVAGMESQNQELKEQIRQLESDKRYIETQKIRYEREVRKLKSEIEHLKT. ATP-binding positions include 197–202 and His336; that span reads GTGKTL. A docks into pockets in the proteasome alpha-ring to cause gate opening region spans residues 410–412; sequence MFA.

It belongs to the AAA ATPase family. Homohexamer. The hexameric complex has a two-ring architecture resembling a top hat that caps the 20S proteasome core at one or both ends. Upon ATP-binding, the C-terminus of PAN interacts with the alpha-rings of the proteasome core by binding to the intersubunit pockets.

The protein localises to the cytoplasm. Its function is as follows. ATPase which is responsible for recognizing, binding, unfolding and translocation of substrate proteins into the archaeal 20S proteasome core particle. Is essential for opening the gate of the 20S proteasome via an interaction with its C-terminus, thereby allowing substrate entry and access to the site of proteolysis. Thus, the C-termini of the proteasomal ATPase function like a 'key in a lock' to induce gate opening and therefore regulate proteolysis. Unfolding activity requires energy from ATP hydrolysis, whereas ATP binding alone promotes ATPase-20S proteasome association which triggers gate opening, and supports translocation of unfolded substrates. This is Proteasome-activating nucleotidase from Methanospirillum hungatei JF-1 (strain ATCC 27890 / DSM 864 / NBRC 100397 / JF-1).